Reading from the N-terminus, the 277-residue chain is MERVRGLVELLRPGNAVAAGGLTFIGAFVAGGLSSPQSMAFAVVATVLATGAGNAINDYFDRDIDAINEPDRPIPRGAVSPRGALVYSVALFAVAVVLTLLLPWLAIAIAAINLVALVAYTEVFKGLPGVGNALVAYLTGSTFLYGGAAVGGDLAAVVVLFALAACATMAREIVKDVEDIDGDRAEGLRTLPIVIGERRSLYVAAGFVVVAVLSSPLPYLLGLFGWVYLVVLVPALCGLAAATWRSFSDPTTGQAWLKASMFAAAVAFVIGRLAVVA.

7 helical membrane-spanning segments follow: residues 13–33 (PGNAVAAGGLTFIGAFVAGGL), 40–60 (AFAVVATVLATGAGNAINDYF), 89–109 (VALFAVAVVLTLLLPWLAIAI), 143–163 (FLYGGAAVGGDLAAVVVLFAL), 199–219 (RSLYVAAGFVVVAVLSSPLPY), 220–240 (LLGLFGWVYLVVLVPALCGLA), and 256–276 (WLKASMFAAAVAFVIGRLAVV).

Belongs to the UbiA prenyltransferase family. DGGGP synthase subfamily. The cofactor is Mg(2+).

It is found in the cell membrane. The catalysed reaction is sn-3-O-(geranylgeranyl)glycerol 1-phosphate + (2E,6E,10E)-geranylgeranyl diphosphate = 2,3-bis-O-(geranylgeranyl)-sn-glycerol 1-phosphate + diphosphate. Its pathway is membrane lipid metabolism; glycerophospholipid metabolism. Functionally, prenyltransferase that catalyzes the transfer of the geranylgeranyl moiety of geranylgeranyl diphosphate (GGPP) to the C2 hydroxyl of (S)-3-O-geranylgeranylglyceryl phosphate (GGGP). This reaction is the second ether-bond-formation step in the biosynthesis of archaeal membrane lipids. The polypeptide is Digeranylgeranylglyceryl phosphate synthase (Natronomonas pharaonis (strain ATCC 35678 / DSM 2160 / CIP 103997 / JCM 8858 / NBRC 14720 / NCIMB 2260 / Gabara) (Halobacterium pharaonis)).